Reading from the N-terminus, the 886-residue chain is uncharacterized protein (886 aa).

An N-terminal signal peptide occupies residues 1 to 20 (MKIIKSLILLVLFMASPAKG). 5 consecutive transmembrane segments (helical) span residues 520–540 (VTIFGLMFVLGALKLTAVEVV), 609–629 (LLFIQLLQIHNGLAFIVIITI), 647–667 (VIAFIGLTVMISLAPFFIILM), 680–700 (ISILFSYVVQPTILLIFFLLI), and 779–799 (LLFYSYCLMSYGLVSFVTIVV). The disordered stretch occupies residues 856–886 (EARKPQGGGEHTGKFFQNRNDVKPEQTERND). Basic and acidic residues predominate over residues 875–886 (NDVKPEQTERND).

The protein belongs to the TrbL/VirB6 family.

The protein localises to the cell membrane. This is an uncharacterized protein from Rickettsia bellii (strain RML369-C).